Here is an 865-residue protein sequence, read N- to C-terminus: Leucine--tRNA ligase (865 aa).

Positions 41–51 (PYPSGRIHMGH) match the 'HIGH' region motif. Residues 614–618 (KMSKS) carry the 'KMSKS' region motif. ATP is bound at residue Lys617.

Belongs to the class-I aminoacyl-tRNA synthetase family.

The protein resides in the cytoplasm. The enzyme catalyses tRNA(Leu) + L-leucine + ATP = L-leucyl-tRNA(Leu) + AMP + diphosphate. This is Leucine--tRNA ligase from Rhodospirillum centenum (strain ATCC 51521 / SW).